The following is a 429-amino-acid chain: Enolase (429 aa).

Glutamine 167 is a (2R)-2-phosphoglycerate binding site. Glutamate 209 functions as the Proton donor in the catalytic mechanism. Mg(2+) contacts are provided by aspartate 246, glutamate 289, and aspartate 316. Residues lysine 341, arginine 370, serine 371, and lysine 392 each contribute to the (2R)-2-phosphoglycerate site. Lysine 341 functions as the Proton acceptor in the catalytic mechanism.

Belongs to the enolase family. Component of the RNA degradosome, a multiprotein complex involved in RNA processing and mRNA degradation. Requires Mg(2+) as cofactor.

Its subcellular location is the cytoplasm. It localises to the secreted. The protein localises to the cell surface. The enzyme catalyses (2R)-2-phosphoglycerate = phosphoenolpyruvate + H2O. It functions in the pathway carbohydrate degradation; glycolysis; pyruvate from D-glyceraldehyde 3-phosphate: step 4/5. In terms of biological role, catalyzes the reversible conversion of 2-phosphoglycerate (2-PG) into phosphoenolpyruvate (PEP). It is essential for the degradation of carbohydrates via glycolysis. The protein is Enolase of Pseudomonas putida (strain ATCC 47054 / DSM 6125 / CFBP 8728 / NCIMB 11950 / KT2440).